We begin with the raw amino-acid sequence, 651 residues long: Choline transporter-like protein 1 (651 aa).

The Cytoplasmic portion of the chain corresponds to 1–25 (MGCCGSTQNSKRDWRPLEEHSCTDI). Residues 26–46 (PWLLLFILFCVGMGFICGFSI) form a helical membrane-spanning segment. Residues 47–208 (ATGAASRLVF…RLISGVMTSK (162 aa)) lie on the Extracellular side of the membrane. Asparagine 131 and asparagine 176 each carry an N-linked (GlcNAc...) asparagine glycan. Residues 209–229 (EIIMGLCLLSLVLSMILMVII) traverse the membrane as a helical segment. Topologically, residues 230 to 234 (RYISR) are cytoplasmic. Residues 235–255 (VLVWIITILVVLGSLGGTGVL) traverse the membrane as a helical segment. Topologically, residues 256 to 284 (WWLYADNKKSLNENLPPDQLQVSKDNLQA) are extracellular. A helical transmembrane segment spans residues 285 to 305 (LLVYAIAATVFTVILLLMMLI). Residues 306 to 311 (MRKRVA) lie on the Cytoplasmic side of the membrane. The chain crosses the membrane as a helical span at residues 312-332 (LTIALFNVAGKVFIHLPLLVF). Topologically, residues 333 to 334 (QP) are extracellular. The helical transmembrane segment at 335 to 355 (FWTFFALLLFWVYWVMVLLFL) threads the bilayer. Residues 356–376 (GTAGDPFTNEQGFVEFRINGP) are Cytoplasmic-facing. Residues 377–397 (LQYMWWYHLVGLIWISEFILA) traverse the membrane as a helical segment. Over 398–438 (CQQMTIAGAVVTYYFTRNKNDLPFTPILASVNRLIRYHLGT) the chain is Extracellular. A helical transmembrane segment spans residues 439–459 (VAKGAFIITLVKIPRMILMYI). Topologically, residues 460–533 (HSQLKGKENA…RVAAINTVGD (74 aa)) are cytoplasmic. Residues 534-554 (FMLFLGKILIVSCTGLAGIML) traverse the membrane as a helical segment. Over 555–562 (LNYQRDYT) the chain is Extracellular. Residues 563-583 (VWVLPLIIVCLFAFLVAHCFL) form a helical membrane-spanning segment. Over 584 to 651 (SIYEMVVDVL…KPMASGTSTA (68 aa)) the chain is Cytoplasmic. The segment at 629–651 (LKEPGSTAEGRELKPMASGTSTA) is disordered.

Belongs to the CTL (choline transporter-like) family.

The protein localises to the cell membrane. It is found in the mitochondrion outer membrane. It catalyses the reaction choline(out) + n H(+)(in) = choline(in) + n H(+)(out). It carries out the reaction ethanolamine(out) + n H(+)(in) = ethanolamine(in) + n H(+)(out). Functionally, choline/H+ antiporter. Also acts as a high-affinity ethanolamine/H+ antiporter, regulating the supply of extracellular ethanolamine (Etn) for the CDP-Etn pathway, redistribute intracellular Etn and balance the CDP-Cho and CDP-Etn arms of the Kennedy pathway. Involved in membrane synthesis and myelin production. The protein is Choline transporter-like protein 1 (slc44a1) of Xenopus laevis (African clawed frog).